Reading from the N-terminus, the 534-residue chain is Signal recognition particle subunit SRP54 (534 aa).

The tract at residues 1-296 (MVLQDLGRRI…EPKAFIQKLL (296 aa)) is G-domain. GTP is bound by residues 109–116 (GLQGAGKT), 191–195 (DTSGR), and 249–252 (TKTD). The interval 297–534 (GMGDMAGLVE…GGGGGRGRGR (238 aa)) is M-domain.

This sequence belongs to the GTP-binding SRP family. SRP54 subfamily. In terms of assembly, fungal signal recognition particle consists of a 7S RNA molecule (scR1) and at least six protein subunits: srp72, srp68, srpA/srp54, sec65, srp21 and srp14.

It localises to the cytoplasm. Its subcellular location is the endoplasmic reticulum. It catalyses the reaction GTP + H2O = GDP + phosphate + H(+). Its function is as follows. Signal-recognition-particle (SRP) assembly has a crucial role in targeting secretory proteins to the rough endoplasmic reticulum (ER) membrane. SRP is required for the cotranslational protein translocation for ER import and preferentially recognizes strongly hydrophobic signal sequences. It is involved in targeting the nascent chain-ribosome (RNC) complex to the ER and is proposed to participate in the arrest of nascent chain elongation during membrane targeting. srpA/srp54 binds to the signal sequence of presecretory protein when they emerge from the ribosomes. srpA/srp54 interacts with the scR1 RNA and mediates the association of the resulting SRP-RNC complex with the signal recognition particle receptor (SR) via its alpha subunit srp101. Both, srpA/srp54 and srp101, are locked in their GTP bound forms in the SRP-RNC-SR complex, which dissociates upon transferring the signal sequence to the protein-conducting channel (translocon). After signal sequence transfer, srpA/srp54 and srp101 act as reciprocal GTPase-activating proteins (GAPs), thereby resolving their association. This is Signal recognition particle subunit SRP54 (srpA) from Aspergillus niger.